The chain runs to 155 residues: 6,7-dimethyl-8-ribityllumazine synthase (155 aa).

5-amino-6-(D-ribitylamino)uracil is bound by residues Phe22, 56 to 58 (AFE), and 80 to 82 (AVI). 85-86 (AT) serves as a coordination point for (2S)-2-hydroxy-3-oxobutyl phosphate. The active-site Proton donor is the His88. Phe113 is a binding site for 5-amino-6-(D-ribitylamino)uracil. Arg127 provides a ligand contact to (2S)-2-hydroxy-3-oxobutyl phosphate.

The protein belongs to the DMRL synthase family.

The enzyme catalyses (2S)-2-hydroxy-3-oxobutyl phosphate + 5-amino-6-(D-ribitylamino)uracil = 6,7-dimethyl-8-(1-D-ribityl)lumazine + phosphate + 2 H2O + H(+). It functions in the pathway cofactor biosynthesis; riboflavin biosynthesis; riboflavin from 2-hydroxy-3-oxobutyl phosphate and 5-amino-6-(D-ribitylamino)uracil: step 1/2. Catalyzes the formation of 6,7-dimethyl-8-ribityllumazine by condensation of 5-amino-6-(D-ribitylamino)uracil with 3,4-dihydroxy-2-butanone 4-phosphate. This is the penultimate step in the biosynthesis of riboflavin. The polypeptide is 6,7-dimethyl-8-ribityllumazine synthase (Clostridium acetobutylicum (strain ATCC 824 / DSM 792 / JCM 1419 / IAM 19013 / LMG 5710 / NBRC 13948 / NRRL B-527 / VKM B-1787 / 2291 / W)).